We begin with the raw amino-acid sequence, 144 residues long: MSSKFIKPGRLVILLNGKYAGRKAVVIKTFDDATASKSRPYGHCLVAGIDKYPRSIVRSMSRKTILKRTAIRSFVKVVNYNHIMPTRYNFEGRDESAFTGLKNTVTVESSQVAKRAHTRLAVKKIFEAKHKAGKSKWFFSKLRF.

Residues 6 to 43 (IKPGRLVILLNGKYAGRKAVVIKTFDDATASKSRPYGH) form the KOW domain.

The protein belongs to the eukaryotic ribosomal protein eL27 family.

The polypeptide is Large ribosomal subunit protein eL27 (rpl27) (Dictyostelium discoideum (Social amoeba)).